The chain runs to 229 residues: DNA mismatch repair protein MutH (229 aa).

Belongs to the MutH family.

The protein resides in the cytoplasm. Sequence-specific endonuclease that cleaves unmethylated GATC sequences. It is involved in DNA mismatch repair. The chain is DNA mismatch repair protein MutH from Escherichia coli O17:K52:H18 (strain UMN026 / ExPEC).